A 308-amino-acid chain; its full sequence is Glycine--tRNA ligase alpha subunit (308 aa).

Belongs to the class-II aminoacyl-tRNA synthetase family. As to quaternary structure, tetramer of two alpha and two beta subunits.

It is found in the cytoplasm. It carries out the reaction tRNA(Gly) + glycine + ATP = glycyl-tRNA(Gly) + AMP + diphosphate. In Polaromonas naphthalenivorans (strain CJ2), this protein is Glycine--tRNA ligase alpha subunit.